The primary structure comprises 89 residues: Small ribosomal subunit protein uS14A (89 aa).

It belongs to the universal ribosomal protein uS14 family. In terms of assembly, part of the 30S ribosomal subunit. Contacts proteins S3 and S10.

Its function is as follows. Binds 16S rRNA, required for the assembly of 30S particles and may also be responsible for determining the conformation of the 16S rRNA at the A site. In Staphylococcus aureus (strain Newman), this protein is Small ribosomal subunit protein uS14A.